A 100-amino-acid chain; its full sequence is UPF0213 protein YhbQ (100 aa).

Residues 2–77 (TPWFLYLIRT…KQLTKRQKER (76 aa)) form the GIY-YIG domain.

The protein belongs to the UPF0213 family.

In Escherichia coli O157:H7, this protein is UPF0213 protein YhbQ.